The sequence spans 445 residues: Ribosomal protein uS12 methylthiotransferase RimO (445 aa).

The region spanning 4–119 (YKVGMVSLGC…INEAIMNFIN (116 aa)) is the MTTase N-terminal domain. Residues C13, C48, C82, C157, C161, and C164 each coordinate [4Fe-4S] cluster. The 231-residue stretch at 143–373 (TTDKATAYLR…MLLQKEVSEE (231 aa)) folds into the Radical SAM core domain. Residues 376–441 (KNKVGREYDV…EYDLVGVVCN (66 aa)) form the TRAM domain.

This sequence belongs to the methylthiotransferase family. RimO subfamily. The cofactor is [4Fe-4S] cluster.

It localises to the cytoplasm. The catalysed reaction is L-aspartate(89)-[ribosomal protein uS12]-hydrogen + (sulfur carrier)-SH + AH2 + 2 S-adenosyl-L-methionine = 3-methylsulfanyl-L-aspartate(89)-[ribosomal protein uS12]-hydrogen + (sulfur carrier)-H + 5'-deoxyadenosine + L-methionine + A + S-adenosyl-L-homocysteine + 2 H(+). Catalyzes the methylthiolation of an aspartic acid residue of ribosomal protein uS12. The sequence is that of Ribosomal protein uS12 methylthiotransferase RimO from Clostridium perfringens (strain 13 / Type A).